The chain runs to 340 residues: MDENVAEFLRRIILKIPLCEMKTILEAWDFLSEDQLQSINLKQRKEFLAQEVILLCEDKCASLDDMALLDLMYTQFHRHQKLWNVFQMSKEPGGNDVDLFDMEQFQSSFKRILQRALKNVTVSFRVYEKNSVWIRVAWGTQYSQPNQYKPTFVVYYPQTPYVFISSCYLKSTVPLLHQALKVASKHHQMAQLDLRSRHLDSLTAIVFNEYDQTFENYNSTASWREGSLGLKTDLDSKIIHENTEEKVRIHRATQEAFGAYPQPQLEFAQYKLETKFKSDVGGGILADRKEPLRCLVKFSSPHLLEALKSLAPAGIADTPLSPLLTCIPSKKMNYFKIRDK.

Phosphoserine occurs at positions 227 and 236.

This sequence belongs to the CENP-N/CHL4 family. In terms of assembly, component of the CENPA-NAC complex, at least composed of CENPA, CENPC, CENPH, CENPM, CENPN, CENPT and CENPU. The CENPA-NAC complex interacts with the CENPA-CAD complex, composed of CENPI, CENPK, CENPL, CENPO, CENPP, CENPQ, CENPR and CENPS. Interacts directly with CENPA. Identified in a centromere complex containing histones H2A, H2B and H4, and at least CENPA, CENPB, CENPC, CENPT, CENPN, HJURP, SUPT16H, SSRP1 and RSF1.

The protein resides in the nucleus. Its subcellular location is the chromosome. It localises to the centromere. It is found in the kinetochore. Functionally, component of the CENPA-NAC (nucleosome-associated) complex, a complex that plays a central role in assembly of kinetochore proteins, mitotic progression and chromosome segregation. The CENPA-NAC complex recruits the CENPA-CAD (nucleosome distal) complex and may be involved in incorporation of newly synthesized CENPA into centromeres. CENPN is the first protein to bind specifically to CENPA nucleosomes and the direct binding of CENPA nucleosomes by CENPN is required for centromere assembly. Required for chromosome congression and efficiently align the chromosomes on a metaphase plate. The polypeptide is Centromere protein N (Cenpn) (Rattus norvegicus (Rat)).